The chain runs to 692 residues: Elongation factor G (692 aa).

The tr-type G domain occupies 8–283 (EDYRNFGIMA…AVVDYLPSPL (276 aa)). Residues 17–24 (AHIDAGKT), 81–85 (DTPGH), and 135–138 (NKMD) each bind GTP.

The protein belongs to the TRAFAC class translation factor GTPase superfamily. Classic translation factor GTPase family. EF-G/EF-2 subfamily.

The protein resides in the cytoplasm. In terms of biological role, catalyzes the GTP-dependent ribosomal translocation step during translation elongation. During this step, the ribosome changes from the pre-translocational (PRE) to the post-translocational (POST) state as the newly formed A-site-bound peptidyl-tRNA and P-site-bound deacylated tRNA move to the P and E sites, respectively. Catalyzes the coordinated movement of the two tRNA molecules, the mRNA and conformational changes in the ribosome. The chain is Elongation factor G from Caulobacter sp. (strain K31).